A 509-amino-acid polypeptide reads, in one-letter code: Histidine--tRNA ligase, cytoplasmic (509 aa).

The residue at position 2 (Ala-2) is an N-acetylalanine. One can recognise a WHEP-TRS domain in the interval 3–59 (DRAALEELVRLQGAHVRGLKEQKASAEQIEEEVTKLLKLKAQLGQDEGKQKFVLKTP). Position 66 is a phosphoserine (Ser-66). Residues 130–132 (DLT), Arg-157, Gln-173, Asp-177, Arg-326, and 330–331 (YY) contribute to the L-histidine site. Ser-356 carries the post-translational modification Phosphoserine.

It belongs to the class-II aminoacyl-tRNA synthetase family. In terms of assembly, homodimer.

The protein localises to the cytoplasm. It catalyses the reaction tRNA(His) + L-histidine + ATP = L-histidyl-tRNA(His) + AMP + diphosphate + H(+). Functionally, catalyzes the ATP-dependent ligation of histidine to the 3'-end of its cognate tRNA, via the formation of an aminoacyl-adenylate intermediate (His-AMP). Plays a role in axon guidance. This is Histidine--tRNA ligase, cytoplasmic (Hars1) from Mus musculus (Mouse).